The primary structure comprises 381 residues: Gustatory and pheromone receptor 39a, isoform D (381 aa).

Residues 1 to 43 (MKRNAFEELRVQLRTLKWLGVLRFTIDFNKCLVRENASEERSA) lie on the Cytoplasmic side of the membrane. Residues 44 to 64 (WLYLIGVVGITCSLIVYSTYF) traverse the membrane as a helical segment. Over 65-78 (PSHFIMGKHNTTGN) the chain is Extracellular. A glycan (N-linked (GlcNAc...) asparagine) is linked at Asn74. The chain crosses the membrane as a helical span at residues 79–101 (CYALINIRSCSIVTMLIYTQLYI). The Cytoplasmic segment spans residues 102-128 (QRFRFVALLQSILRFNQISGSHREEGR). Residues 129-149 (FAFYYYTHLSLLIICMLNYAY) traverse the membrane as a helical segment. The Extracellular portion of the chain corresponds to 150–172 (GYWTAGVRLTTIPIYLLQYGFSY). Residues 173 to 193 (LFLGQVVVLFACIQQILLSIL) form a helical membrane-spanning segment. The Cytoplasmic portion of the chain corresponds to 194–234 (KYYNQVVLKNIKSSKESREFYYNFCKYNQVIWLSYTEINHC). A helical membrane pass occupies residues 235-255 (FGLLLLLVTGLILLITPSGPF). The Extracellular segment spans residues 256 to 273 (YLVSTIFEGRFRQNWQFS). A helical transmembrane segment spans residues 274 to 294 (LMSFTAILWSLPWIVLLVLAM). Residues 295-350 (GRNDVQKEANKTAKMLTKVPRTGTGLDRMIEKFLLKNLRQKPILTAYGFFALDKST) lie on the Cytoplasmic side of the membrane. The chain crosses the membrane as a helical span at residues 351 to 371 (LFKLFTAIFTYMVILVQFKEM). The Extracellular portion of the chain corresponds to 372–381 (ENSTKSINKF). Asn373 carries an N-linked (GlcNAc...) asparagine glycan.

The protein belongs to the insect chemoreceptor superfamily. Gustatory receptor (GR) family. Gr21a subfamily. As to expression, expressed in the adult labellar chemosensory neurons and adult thorax and abdomen.

The protein localises to the cell membrane. Gustatory receptor which mediates acceptance or avoidance behavior, depending on its substrates. Plays a role in sustaining courtship behavior in males, possibly through the reception of a stimulating arrestant pheromone. This Drosophila melanogaster (Fruit fly) protein is Gustatory and pheromone receptor 39a, isoform D (Gr39a).